Here is a 749-residue protein sequence, read N- to C-terminus: Replication restart protein PriA (749 aa).

The Helicase ATP-binding domain maps to 224 to 391; the sequence is SLKTSQFHTH…LSGKYVLSRL (168 aa). Residue 237 to 244 participates in ATP binding; the sequence is GITGSGKT. The DEAH box signature appears at 333-336; sequence DEEH. Residues Cys-454, Cys-457, Cys-463, Cys-466, Cys-481, Cys-484, Cys-495, and Cys-498 each contribute to the Zn(2+) site. The Helicase C-terminal domain maps to 490–658; sequence DLPQSCPKCL…EYPPFIRLIR (169 aa).

It belongs to the helicase family. PriA subfamily. In terms of assembly, component of the replication restart primosome. Zn(2+) serves as cofactor.

It catalyses the reaction Couples ATP hydrolysis with the unwinding of duplex DNA by translocating in the 3'-5' direction.. It carries out the reaction ATP + H2O = ADP + phosphate + H(+). In terms of biological role, initiates the restart of stalled replication forks, which reloads the replicative helicase on sites other than the origin of replication. Recognizes and binds to abandoned replication forks and remodels them to uncover a helicase loading site. Promotes assembly of the primosome at these replication forks. This Chlamydia pneumoniae (Chlamydophila pneumoniae) protein is Replication restart protein PriA.